The chain runs to 531 residues: Jacalin-related lectin 16 (531 aa).

4 Jacalin-type lectin domains span residues 1 to 87, 90 to 232, 235 to 378, and 385 to 528; these read MDRS…YFTW, PTKM…YFTT, LISL…YFRP, and TEKV…NVLP.

The protein belongs to the jacalin lectin family.

This chain is Jacalin-related lectin 16 (JAL16), found in Arabidopsis thaliana (Mouse-ear cress).